We begin with the raw amino-acid sequence, 397 residues long: Enoyl-[acyl-carrier-protein] reductase [NADH] FabV (397 aa).

NAD(+) is bound by residues G48–Y53, F74–E75, D111–A112, and L139–A140. Y225 contributes to the substrate binding site. The Proton donor role is filled by Y235. Residues K244 and V273 to T275 each bind NAD(+).

This sequence belongs to the TER reductase family. In terms of assembly, monomer.

The catalysed reaction is a 2,3-saturated acyl-[ACP] + NAD(+) = a (2E)-enoyl-[ACP] + NADH + H(+). It functions in the pathway lipid metabolism; fatty acid biosynthesis. Its activity is regulated as follows. Resistant to triclosan. Functionally, involved in the final reduction of the elongation cycle of fatty acid synthesis (FAS II). Catalyzes the NADH-dependent reduction of the carbon-carbon double bond in the enoyl moiety that is covalently linked to an acyl carrier protein (ACP). The protein is Enoyl-[acyl-carrier-protein] reductase [NADH] FabV of Aeromonas salmonicida (strain A449).